A 390-amino-acid polypeptide reads, in one-letter code: Probable tRNA pseudouridine synthase D (390 aa).

Aspartate 93 serves as the catalytic Nucleophile. Residues 166–353 (YVLNYYGIQR…YGTRRKMITP (188 aa)) enclose the TRUD domain.

It belongs to the pseudouridine synthase TruD family.

It carries out the reaction uridine(13) in tRNA = pseudouridine(13) in tRNA. Could be responsible for synthesis of pseudouridine from uracil-13 in transfer RNAs. The polypeptide is Probable tRNA pseudouridine synthase D (Methanococcus maripaludis (strain C5 / ATCC BAA-1333)).